The chain runs to 469 residues: Calcium-binding mitochondrial carrier protein SCaMC-2 (469 aa).

The Mitochondrial intermembrane portion of the chain corresponds to 1-189; it reads MLCLCLYVPL…ERQTGMWWRH (189 aa). EF-hand domains follow at residues 47-80, 78-113, and 114-149; these read TYRQWKQKIVQAGDKDLDGQLDFEEFVHYLQDHE, DHEKKLRLVFKSLDKKNDGRIDAQEIMQSLRDLGVK, and ISEQQAEKILKSMDKNGTMTIDWNEWRDYHLLHPVE. 5 residues coordinate Ca(2+): D60, D62, D64, Q66, and E71. Solcar repeat units lie at residues 184–270, 278–363, and 375–463; these read GMWW…IKRL, LRIH…LKNA, and PGVF…LKIT. The chain crosses the membrane as a helical span at residues 190–207; sequence LVAGGGAGAVSRTCTAPL. The Mitochondrial matrix segment spans residues 208-244; it reads DRLKVLMQVHASRSNNMCIVGGFTQMIREGGARSLWR. A helical transmembrane segment spans residues 245 to 264; the sequence is GNGINVLKIAPESAIKFMAY. The Mitochondrial intermembrane segment spans residues 265–287; that stretch reads EQIKRLIGSDQETLRIHERLVAG. Residues 288–301 form a helical membrane-spanning segment; the sequence is SLAGAIAQSSIYPM. Over 302–337 the chain is Mitochondrial matrix; the sequence is EVLKTRMALRKTGQYSGMLDCARKILAREGMAAFYK. Residues 338-357 form a helical membrane-spanning segment; that stretch reads GYVPNMLGIIPYAGIDLAVY. Over 358–380 the chain is Mitochondrial intermembrane; sequence ETLKNAWLQRYAVNSADPGVFVL. Residues 381 to 398 traverse the membrane as a helical segment; the sequence is LACGTMSSTCGQLASYPL. Residues 399-437 are Mitochondrial matrix-facing; the sequence is ALVRTRMQAQASMEGAPEVTMSSLFKQILRTEGAFGLYR. A helical membrane pass occupies residues 438-457; it reads GLAPNFMKVIPAVSISYVVY. Over 458-469 the chain is Mitochondrial intermembrane; that stretch reads ENLKITLGVQSR.

It belongs to the mitochondrial carrier (TC 2.A.29) family.

The protein localises to the mitochondrion inner membrane. Calcium-dependent mitochondrial solute carrier. Mitochondrial solute carriers shuttle metabolites, nucleotides, and cofactors through the mitochondrial inner membrane. May act as a ATP-Mg/Pi exchanger that mediates the transport of Mg-ATP in exchange for phosphate, catalyzing the net uptake or efflux of adenine nucleotides into or from the mitochondria. This is Calcium-binding mitochondrial carrier protein SCaMC-2 (SLC25A25) from Bos taurus (Bovine).